We begin with the raw amino-acid sequence, 102 residues long: Aspartyl/glutamyl-tRNA(Asn/Gln) amidotransferase subunit C (102 aa).

It belongs to the GatC family. Heterotrimer of A, B and C subunits.

The catalysed reaction is L-glutamyl-tRNA(Gln) + L-glutamine + ATP + H2O = L-glutaminyl-tRNA(Gln) + L-glutamate + ADP + phosphate + H(+). It carries out the reaction L-aspartyl-tRNA(Asn) + L-glutamine + ATP + H2O = L-asparaginyl-tRNA(Asn) + L-glutamate + ADP + phosphate + 2 H(+). Functionally, allows the formation of correctly charged Asn-tRNA(Asn) or Gln-tRNA(Gln) through the transamidation of misacylated Asp-tRNA(Asn) or Glu-tRNA(Gln) in organisms which lack either or both of asparaginyl-tRNA or glutaminyl-tRNA synthetases. The reaction takes place in the presence of glutamine and ATP through an activated phospho-Asp-tRNA(Asn) or phospho-Glu-tRNA(Gln). The polypeptide is Aspartyl/glutamyl-tRNA(Asn/Gln) amidotransferase subunit C (Bordetella bronchiseptica (strain ATCC BAA-588 / NCTC 13252 / RB50) (Alcaligenes bronchisepticus)).